We begin with the raw amino-acid sequence, 607 residues long: Chaperone protein DnaK (607 aa).

Thr-174 bears the Phosphothreonine; by autocatalysis mark. The segment covering 579 to 592 (AQAQAQQQAGANAG) has biased composition (low complexity). The segment at 579 to 607 (AQAQAQQQAGANAGSDKKDEDVAEAEVVD) is disordered.

It belongs to the heat shock protein 70 family.

Its function is as follows. Acts as a chaperone. The protein is Chaperone protein DnaK of Fusobacterium nucleatum subsp. nucleatum (strain ATCC 25586 / DSM 15643 / BCRC 10681 / CIP 101130 / JCM 8532 / KCTC 2640 / LMG 13131 / VPI 4355).